We begin with the raw amino-acid sequence, 336 residues long: Coproporphyrin III ferrochelatase (336 aa).

Positions 52 and 116 each coordinate Fe-coproporphyrin III. Fe(2+) is bound by residues His172 and Glu255.

This sequence belongs to the ferrochelatase family.

Its subcellular location is the cytoplasm. It carries out the reaction Fe-coproporphyrin III + 2 H(+) = coproporphyrin III + Fe(2+). Its pathway is porphyrin-containing compound metabolism; protoheme biosynthesis. Involved in coproporphyrin-dependent heme b biosynthesis. Catalyzes the insertion of ferrous iron into coproporphyrin III to form Fe-coproporphyrin III. The sequence is that of Coproporphyrin III ferrochelatase from Mycolicibacterium paratuberculosis (strain ATCC BAA-968 / K-10) (Mycobacterium paratuberculosis).